We begin with the raw amino-acid sequence, 767 residues long: Mst2 complex subunit nto1 (767 aa).

A PHD-type 1 zinc finger spans residues 194-244 (DGRCVICNEAECENSNAIVFCDNCNTSVHQNCYGIPFVPEGQWFCKKCLLA). The C2HC pre-PHD-type zinc-finger motif lies at 248–281 (VICCAFCPDRDGAFCTTLDGRWCHTICAIAIPEI). The segment at 305 to 363 (LVCCICKLRWGTCVQCSDKNCYAAYHITCARRAGFFYKIYSHSASYDSVDMETYCDKHT) adopts a PHD-type 2 zinc-finger fold. Residues 724–752 (VTGQSNHALPNSVTKKNGTKQPYTKNSLP) show a composition bias toward polar residues. The interval 724 to 767 (VTGQSNHALPNSVTKKNGTKQPYTKNSLPFNERITRSKAKKNYS) is disordered.

In terms of assembly, component of the mst2 complex composed of at least eaf6, mst2, nto1, pdp3, ptf1, ptf2 and tfg3.

It is found in the cytoplasm. It localises to the nucleus. Functionally, component of the mst2 complex which is a highly specific H3 lysine 14 (H3K14) acetyltransferase that functions together with gcn5 to regulate global levels of H3K14 acetylation (H3K14ac), critical for DNA damage checkpoint activation. This Schizosaccharomyces pombe (strain 972 / ATCC 24843) (Fission yeast) protein is Mst2 complex subunit nto1 (nto1).